A 49-amino-acid chain; its full sequence is Large ribosomal subunit protein bL33 (49 aa).

Belongs to the bacterial ribosomal protein bL33 family.

The chain is Large ribosomal subunit protein bL33 from Finegoldia magna (strain ATCC 29328 / DSM 20472 / WAL 2508) (Peptostreptococcus magnus).